The following is a 242-amino-acid chain: Zinc import ATP-binding protein ZnuC (242 aa).

Residues 24-241 (INVKDLSFAY…EKFLKMFSSY (218 aa)) form the ABC transporter domain. 56–63 (GPNGGGKT) contacts ATP.

The protein belongs to the ABC transporter superfamily. Zinc importer (TC 3.A.1.15.5) family. In terms of assembly, the complex is composed of two ATP-binding proteins (ZnuC), two transmembrane proteins (ZnuB) and a solute-binding protein (ZnuA).

The protein resides in the cell inner membrane. The enzyme catalyses Zn(2+)(out) + ATP(in) + H2O(in) = Zn(2+)(in) + ADP(in) + phosphate(in) + H(+)(in). Functionally, part of the ABC transporter complex ZnuABC involved in zinc import. Responsible for energy coupling to the transport system. The polypeptide is Zinc import ATP-binding protein ZnuC (Ehrlichia ruminantium (strain Gardel)).